We begin with the raw amino-acid sequence, 341 residues long: Serine proteinase inhibitor 2 (341 aa).

Belongs to the serpin family. Poxviruses subfamily.

The protein resides in the host cytoplasm. In terms of biological role, viral serpin that inhibits both cysteine and serine proteinases involved in the regulation of host inflammatory and apoptosis processes. Major anti-apoptotic protein which inhibits both intrinsic and extrinsic pathways and strongly cleaves host CASP1 and CASP8 but is a rather poor inhibitor of host CASP3. Prevents the proteolytic activity of host interleukin-1-beta converting enzyme (ICE) and ICE-like enzymes. Can also block apoptosis through host tumor necrosis factor (TNF) receptor. The polypeptide is Serine proteinase inhibitor 2 (OPG199) (Bos taurus (Bovine)).